Here is a 149-residue protein sequence, read N- to C-terminus: UPF0336 protein Lxx02810 (149 aa).

It belongs to the UPF0336 family.

The sequence is that of UPF0336 protein Lxx02810 from Leifsonia xyli subsp. xyli (strain CTCB07).